A 194-amino-acid polypeptide reads, in one-letter code: dTTP/UTP pyrophosphatase (194 aa).

Aspartate 66 acts as the Proton acceptor in catalysis.

It belongs to the Maf family. YhdE subfamily. The cofactor is a divalent metal cation.

The protein localises to the cytoplasm. It carries out the reaction dTTP + H2O = dTMP + diphosphate + H(+). It catalyses the reaction UTP + H2O = UMP + diphosphate + H(+). Its function is as follows. Nucleoside triphosphate pyrophosphatase that hydrolyzes dTTP and UTP. May have a dual role in cell division arrest and in preventing the incorporation of modified nucleotides into cellular nucleic acids. This chain is dTTP/UTP pyrophosphatase, found in Anaeromyxobacter dehalogenans (strain 2CP-1 / ATCC BAA-258).